The following is a 383-amino-acid chain: Putative transcription factor 282R (383 aa).

The protein belongs to the IIV-6 282R family.

In terms of biological role, transcription activation. In Acheta domesticus (House cricket), this protein is Putative transcription factor 282R.